We begin with the raw amino-acid sequence, 158 residues long: MAARCPVGVASVLLLIVLVTVASAASGARSGGGGGGGIRELRGGGAGRRVGGRTEVRDVEGDREVQELGRFSVEEHNRRRRSRDCGDVRLEFGRVVAAQRQVVSGLKYYLRVAAAEEGAAGQNGGEPRVFDAVVVVKPWLESRTLLTFAPAADSPNES.

The signal sequence occupies residues 1–24; that stretch reads MAARCPVGVASVLLLIVLVTVASA. A disordered region spans residues 26–51; it reads SGARSGGGGGGGIRELRGGGAGRRVG. Gly residues predominate over residues 29-49; that stretch reads RSGGGGGGGIRELRGGGAGRR. The 66-residue stretch at 51 to 116 folds into the Cystatin domain; it reads GGRTEVRDVE…KYYLRVAAAE (66 aa). The Secondary area of contact signature appears at 101 to 105; the sequence is QVVSG.

Belongs to the cystatin family. Phytocystatin subfamily.

The protein localises to the secreted. In terms of biological role, specific inhibitor of cysteine proteinases. Probably involved in the regulation of endogenous processes and in defense against pests and pathogens. The protein is Cysteine proteinase inhibitor 4 of Oryza sativa subsp. japonica (Rice).